The sequence spans 246 residues: DNA repair protein RecO (246 aa).

Belongs to the RecO family.

Its function is as follows. Involved in DNA repair and RecF pathway recombination. This chain is DNA repair protein RecO, found in Marinobacter nauticus (strain ATCC 700491 / DSM 11845 / VT8) (Marinobacter aquaeolei).